Reading from the N-terminus, the 529-residue chain is Glutamyl-tRNA reductase (529 aa).

Residue 47 to 50 (TCNR) participates in substrate binding. Residue Cys48 is the Nucleophile of the active site. The segment at 56-80 (SPRQQAPAPPRPGSAPPPSDEELSR) is disordered. The span at 62-73 (PAPPRPGSAPPP) shows a compositional bias: pro residues. Substrate contacts are provided by residues Ser125, 130–132 (EPQ), and Gln136. 205-210 (GAGDMA) is an NADP(+) binding site. Residues 454-505 (RGAVDGPPTPRSARGAAPPASGARGGGSPRHADPRPQAAEDNGVYARQPGGR) are disordered. Residues 464-475 (RSARGAAPPASG) show a composition bias toward low complexity.

Belongs to the glutamyl-tRNA reductase family. As to quaternary structure, homodimer.

The catalysed reaction is (S)-4-amino-5-oxopentanoate + tRNA(Glu) + NADP(+) = L-glutamyl-tRNA(Glu) + NADPH + H(+). Its pathway is porphyrin-containing compound metabolism; protoporphyrin-IX biosynthesis; 5-aminolevulinate from L-glutamyl-tRNA(Glu): step 1/2. Its function is as follows. Catalyzes the NADPH-dependent reduction of glutamyl-tRNA(Glu) to glutamate 1-semialdehyde (GSA). This Sorangium cellulosum (strain So ce56) (Polyangium cellulosum (strain So ce56)) protein is Glutamyl-tRNA reductase.